A 127-amino-acid chain; its full sequence is Protein chibby homolog 1 (127 aa).

Residues 1–10 (MPLFGSTFSP) show a composition bias toward polar residues. The segment at 1–26 (MPLFGSTFSPKKTPPRKSASLSNLHN) is disordered. Residues serine 9 and serine 20 each carry the phosphoserine modification. The minimal region for the interaction with PKD2 stretch occupies residues 60–112 (IAETGISGGVDRREAQRLRRRNQQLEEENNLLRLKVDILLDMLSETTAESHLM). Positions 68–125 (GVDRREAQRLRRRNQQLEEENNLLRLKVDILLDMLSETTAESHLMEKELDELKSVSRR) form a coiled coil. Residues 77-98 (LRRRNQQLEEENNLLRLKVDIL) are leucine-zipper; mediates homodimerization.

The protein belongs to the chibby family. As to quaternary structure, homodimer. Homodimerization is essential for nuclear localization and interaction with KPNA4 but is dispensable for interaction with CTNNB1. Interacts with polycystin-2/PKD2 and GM130. Interacts with the C-terminal region of CTNNB1. Interacts (C-terminus) with TCIM (C-terminus), TCIM competes with CTNNB1 for the interaction with CBY1. Interacts with FAM92A; this interaction facilitates targeting of FAM92A to cilium basal body. Interacts with CIBAR2. Interacts with KPNA4.

It localises to the nucleus speckle. Its subcellular location is the cytoplasm. It is found in the cytoskeleton. The protein resides in the cilium basal body. The protein localises to the microtubule organizing center. It localises to the centrosome. Its subcellular location is the centriole. It is found in the golgi apparatus. The protein resides in the trans-Golgi network. The protein localises to the cell projection. It localises to the cilium. Its subcellular location is the flagellum. It is found in the nucleus. Its function is as follows. Inhibits the Wnt/Wingless pathway by binding to CTNNB1/beta-catenin and inhibiting beta-catenin-mediated transcriptional activation through competition with TCF/LEF transcription factors. Has also been shown to play a role in regulating the intracellular trafficking of polycystin-2/PKD2 and possibly of other intracellular proteins. Promotes adipocyte and cardiomyocyte differentiation. This chain is Protein chibby homolog 1 (CBY1), found in Bos taurus (Bovine).